The primary structure comprises 522 residues: Mediator of RNA polymerase II transcription subunit 1.2 (522 aa).

Residues 13–40 (LLEQRKNQELNIEHIDEEMRLEQVRQAA) are a coiled coil.

It belongs to the Mediator complex subunit 1 family. Component of the Mediator complex.

It localises to the nucleus. Functionally, component of the Mediator complex, a coactivator involved in the regulated transcription of nearly all RNA polymerase II-dependent genes. Mediator functions as a bridge to convey information from gene-specific regulatory proteins to the basal RNA polymerase II transcription machinery. Mediator is recruited to promoters by direct interactions with regulatory proteins and serves as a scaffold for the assembly of a functional preinitiation complex with RNA polymerase II and the general transcription factors. The sequence is that of Mediator of RNA polymerase II transcription subunit 1.2 (mdt-1.2) from Caenorhabditis elegans.